The following is a 399-amino-acid chain: Argininosuccinate synthase (399 aa).

9-17 (AYSGGLDTS) is a binding site for ATP. Y88 is an L-citrulline binding site. An ATP-binding site is contributed by G118. The L-aspartate site is built by T120, N124, and D125. L-citrulline is bound at residue N124. Positions 128, 176, 261, and 273 each coordinate L-citrulline.

It belongs to the argininosuccinate synthase family. Type 1 subfamily. In terms of assembly, homotetramer.

The protein resides in the cytoplasm. It catalyses the reaction L-citrulline + L-aspartate + ATP = 2-(N(omega)-L-arginino)succinate + AMP + diphosphate + H(+). The protein operates within amino-acid biosynthesis; L-arginine biosynthesis; L-arginine from L-ornithine and carbamoyl phosphate: step 2/3. The chain is Argininosuccinate synthase from Mycobacterium leprae (strain TN).